A 172-amino-acid chain; its full sequence is Caltractin (172 aa).

The segment at 1 to 23 is disordered; it reads MQKYGSKKIGATSATSSNKQKVQ. Positions 12-21 are enriched in polar residues; it reads TSATSSNKQK. EF-hand domains follow at residues 29-64, 65-99, 101-136, and 137-172; these read EQRQ…LGFE, PKKE…KMSE, DSHA…LGEN, and MTDE…TNLF. D42, D44, S46, K48, and E53 together coordinate Ca(2+).

The protein belongs to the centrin family. As to quaternary structure, monomer.

The protein localises to the cytoplasm. Its subcellular location is the cytoskeleton. The protein resides in the microtubule organizing center. It localises to the centrosome. Functionally, plays a fundamental role in microtubule-organizing center structure and function. This Naegleria gruberi (Amoeba) protein is Caltractin (CTN).